The primary structure comprises 105 residues: Translation initiation factor 1A (105 aa).

Positions 18 to 92 (IRVKLPNKRI…DKCDIIYRYT (75 aa)) constitute an S1-like domain.

It belongs to the eIF-1A family.

Functionally, seems to be required for maximal rate of protein biosynthesis. Enhances ribosome dissociation into subunits and stabilizes the binding of the initiator Met-tRNA(I) to 40 S ribosomal subunits. The sequence is that of Translation initiation factor 1A (eIF1A) from Methanocorpusculum labreanum (strain ATCC 43576 / DSM 4855 / Z).